Here is a 328-residue protein sequence, read N- to C-terminus: Formimidoylglutamase (328 aa).

Residues H133, D159, H161, D163, D253, and D255 each coordinate Mn(2+).

This sequence belongs to the arginase family. Mn(2+) is required as a cofactor.

The enzyme catalyses N-formimidoyl-L-glutamate + H2O = formamide + L-glutamate. It participates in amino-acid degradation; L-histidine degradation into L-glutamate; L-glutamate from N-formimidoyl-L-glutamate (hydrolase route): step 1/1. Functionally, catalyzes the conversion of N-formimidoyl-L-glutamate to L-glutamate and formamide. The protein is Formimidoylglutamase of Streptococcus pyogenes serotype M5 (strain Manfredo).